We begin with the raw amino-acid sequence, 1322 residues long: Phosphoribosylformylglycinamidine synthase (1322 aa).

Residue 300–311 (GASTGAGGEIRD) coordinates ATP. Over residues 593-608 (QQTPQRANHTETSPTP) the composition is skewed to polar residues. Positions 593–613 (QQTPQRANHTETSPTPNTLPP) are disordered. An ATP-binding site is contributed by Ala702. Mg(2+)-binding residues include Asp703, Glu742, Asn746, and Asp915. Residue Ser917 coordinates ATP. The region spanning 1073–1322 (VAILREQGIN…LFRNARAWVG (250 aa)) is the Glutamine amidotransferase type-1 domain. Cys1166 acts as the Nucleophile in catalysis. Active-site residues include His1287 and Glu1289.

In the N-terminal section; belongs to the FGAMS family. In terms of assembly, monomer.

The protein localises to the cytoplasm. It carries out the reaction N(2)-formyl-N(1)-(5-phospho-beta-D-ribosyl)glycinamide + L-glutamine + ATP + H2O = 2-formamido-N(1)-(5-O-phospho-beta-D-ribosyl)acetamidine + L-glutamate + ADP + phosphate + H(+). Its pathway is purine metabolism; IMP biosynthesis via de novo pathway; 5-amino-1-(5-phospho-D-ribosyl)imidazole from N(2)-formyl-N(1)-(5-phospho-D-ribosyl)glycinamide: step 1/2. Phosphoribosylformylglycinamidine synthase involved in the purines biosynthetic pathway. Catalyzes the ATP-dependent conversion of formylglycinamide ribonucleotide (FGAR) and glutamine to yield formylglycinamidine ribonucleotide (FGAM) and glutamate. This Xylella fastidiosa (strain 9a5c) protein is Phosphoribosylformylglycinamidine synthase.